We begin with the raw amino-acid sequence, 898 residues long: Serine/threonine-protein kinase TAO3 (898 aa).

The Protein kinase domain maps to 24 to 277 (FIGLHEIGHG…SAELLRHDFV (254 aa)). ATP-binding positions include 30 to 38 (IGHGSFGAV) and K53. Catalysis depends on D147, which acts as the Proton acceptor. Disordered regions lie at residues 316 to 362 (TRNG…SQSS) and 405 to 425 (DEAG…VQSQ). A Phosphoserine; by ATM modification is found at S324. 4 positions are modified to phosphoserine: S331, S343, S346, and S349. Positions 334-351 (GTSLNREMDSLGSNHSIP) are enriched in polar residues. Positions 352–362 (SMSVSTGSQSS) are enriched in low complexity. At T357 the chain carries Phosphothreonine. Residue S359 is modified to Phosphoserine. Positions 405-416 (DEAGHGDPRPEP) are enriched in basic and acidic residues. S442 carries the phosphoserine modification. Coiled coils occupy residues 452 to 502 (EQEN…THAN), 548 to 649 (FLES…HAML), and 754 to 879 (LKTL…DMES). The tract at residues 565–596 (EEMNEDHSTPKKEKQERISKHKENLQHTQAEE) is disordered. K830 is modified (N6-acetyllysine).

Belongs to the protein kinase superfamily. STE Ser/Thr protein kinase family. STE20 subfamily. Self-associates. Interacts with ERN1 and TRAF2. Interaction with TRAF2 is facilitated under ER stress conditions, such as treatment with tunicamycin, and may promote TRAF2 phosphorylation. Interacts (via N-terminus) with STK25; the interaction promotes STK25 abundance at the level of protein expression and/or stability. Autophosphorylated. Phosphorylation at Ser-324 by ATM following DNA damage is required for activation of the p38/MAPK14 stress-activated MAPK cascade. Phosphorylated at Ser-324 and on Tyr residues during T cell activation. Phosphorylated by LRRK2.

The protein resides in the cytoplasm. The protein localises to the cell membrane. It localises to the membrane raft. It is found in the lipid droplet. The enzyme catalyses L-seryl-[protein] + ATP = O-phospho-L-seryl-[protein] + ADP + H(+). The catalysed reaction is L-threonyl-[protein] + ATP = O-phospho-L-threonyl-[protein] + ADP + H(+). Its function is as follows. Serine/threonine-protein kinase that acts as a regulator of the p38/MAPK14 stress-activated MAPK cascade and of the MAPK8/JNK cascade. In response to DNA damage, involved in the G2/M transition DNA damage checkpoint by activating the p38/MAPK14 stress-activated MAPK cascade, probably by mediating phosphorylation of upstream MAP2K3 and MAP2K6 kinases. Inhibits basal activity of the MAPK8/JNK cascade and diminishes its activation in response to epidermal growth factor (EGF). Positively regulates canonical T cell receptor (TCR) signaling by preventing early PTPN6/SHP1-mediated inactivation of LCK, ensuring sustained TCR signaling that is required for optimal activation and differentiation of T cells. Phosphorylates PTPN6/SHP1 on 'Thr-394', leading to its polyubiquitination and subsequent proteasomal degradation. Required for cell surface expression of metalloprotease ADAM10 on type 1 transitional B cells which is necessary for their NOTCH-mediated development into marginal zone B cells. Also required for the NOTCH-mediated terminal differentiation of splenic conventional type 2 dendritic cells. Positively regulates osteoblast differentiation by acting as an upstream activator of the JNK pathway. Promotes JNK signaling in hepatocytes and positively regulates hepatocyte lipid storage by inhibiting beta-oxidation and triacylglycerol secretion while enhancing lipid synthesis. Restricts age-associated inflammation by negatively regulating differentiation of macrophages and their production of pro-inflammatory cytokines. Plays a role in negatively regulating the abundance of regulatory T cells in white adipose tissue. This chain is Serine/threonine-protein kinase TAO3 (TAOK3), found in Pongo abelii (Sumatran orangutan).